We begin with the raw amino-acid sequence, 291 residues long: 33 kDa chaperonin (291 aa).

2 cysteine pairs are disulfide-bonded: cysteine 237/cysteine 239 and cysteine 270/cysteine 273.

This sequence belongs to the HSP33 family. In terms of processing, under oxidizing conditions two disulfide bonds are formed involving the reactive cysteines. Under reducing conditions zinc is bound to the reactive cysteines and the protein is inactive.

It is found in the cytoplasm. In terms of biological role, redox regulated molecular chaperone. Protects both thermally unfolding and oxidatively damaged proteins from irreversible aggregation. Plays an important role in the bacterial defense system toward oxidative stress. The sequence is that of 33 kDa chaperonin from Bacillus cereus (strain B4264).